Here is a 259-residue protein sequence, read N- to C-terminus: Phosphatidylglycerol--prolipoprotein diacylglyceryl transferase (259 aa).

4 helical membrane-spanning segments follow: residues Leu-16–Ala-36, Phe-55–Tyr-75, Glu-92–Cys-112, and Ile-117–Gly-137. Position 138 (Arg-138) interacts with a 1,2-diacyl-sn-glycero-3-phospho-(1'-sn-glycerol). Helical transmembrane passes span Gln-172 to Phe-192, Gly-201 to Phe-221, and Ile-228 to Leu-248.

The protein belongs to the Lgt family.

The protein resides in the cell inner membrane. It carries out the reaction L-cysteinyl-[prolipoprotein] + a 1,2-diacyl-sn-glycero-3-phospho-(1'-sn-glycerol) = an S-1,2-diacyl-sn-glyceryl-L-cysteinyl-[prolipoprotein] + sn-glycerol 1-phosphate + H(+). It functions in the pathway protein modification; lipoprotein biosynthesis (diacylglyceryl transfer). In terms of biological role, catalyzes the transfer of the diacylglyceryl group from phosphatidylglycerol to the sulfhydryl group of the N-terminal cysteine of a prolipoprotein, the first step in the formation of mature lipoproteins. The sequence is that of Phosphatidylglycerol--prolipoprotein diacylglyceryl transferase from Rickettsia rickettsii (strain Iowa).